Consider the following 717-residue polypeptide: DNA ligase (717 aa).

NAD(+)-binding positions include 44 to 48 (DADYD), 93 to 94 (SL), and Glu127. Lys129 serves as the catalytic N6-AMP-lysine intermediate. 4 residues coordinate NAD(+): Arg150, Glu186, Lys302, and Lys326. The Zn(2+) site is built by Cys431, Cys434, Cys455, and Cys461. One can recognise a BRCT domain in the interval 639–717 (STDSPVAGKT…EDEWLALIGG (79 aa)).

It belongs to the NAD-dependent DNA ligase family. LigA subfamily. The cofactor is Mg(2+). Mn(2+) is required as a cofactor.

It carries out the reaction NAD(+) + (deoxyribonucleotide)n-3'-hydroxyl + 5'-phospho-(deoxyribonucleotide)m = (deoxyribonucleotide)n+m + AMP + beta-nicotinamide D-nucleotide.. In terms of biological role, DNA ligase that catalyzes the formation of phosphodiester linkages between 5'-phosphoryl and 3'-hydroxyl groups in double-stranded DNA using NAD as a coenzyme and as the energy source for the reaction. It is essential for DNA replication and repair of damaged DNA. The sequence is that of DNA ligase from Sinorhizobium fredii (strain NBRC 101917 / NGR234).